Here is a 74-residue protein sequence, read N- to C-terminus: Large ribosomal subunit protein bL31 (74 aa).

Belongs to the bacterial ribosomal protein bL31 family. Type A subfamily. As to quaternary structure, part of the 50S ribosomal subunit.

Binds the 23S rRNA. The sequence is that of Large ribosomal subunit protein bL31 from Xanthobacter autotrophicus (strain ATCC BAA-1158 / Py2).